The primary structure comprises 702 residues: Phosphatase and actin regulator 4 (702 aa).

Disordered regions lie at residues 1 to 37, 72 to 194, and 222 to 363; these read MEDP…KSKF, RKPR…SSGG, and NLSV…PFPA. One copy of the RPEL 1 repeat lies at 63-88; the sequence is EVLERKISMRKPREELVKRGVLLEDP. Basic and acidic residues predominate over residues 72 to 84; sequence RKPREELVKRGVL. Over residues 106–120 the composition is skewed to polar residues; sequence GHTTPIGNARSSSPV. Residues serine 116, serine 118, serine 131, and serine 147 each carry the phosphoserine modification. Polar residues predominate over residues 147–156; the sequence is STGSQPNSEA. Pro residues predominate over residues 163-173; it reads VPKPPLLPPKR. Residues 233-250 show a composition bias toward low complexity; the sequence is TLPAAPASTNTTATPSLT. Residues serine 270 and serine 291 each carry the phosphoserine modification. A compositionally biased stretch (polar residues) spans 301–318; that stretch reads PSTSVPTLESAAAITTKT. Residues serine 342 and serine 344 each carry the phosphoserine modification. Pro residues predominate over residues 342 to 362; sequence SPSPPLPTHIPPEPPRTPPFP. Threonine 358 bears the Phosphothreonine mark. At serine 427 the chain carries Phosphoserine. The residue at position 432 (threonine 432) is a Phosphothreonine. Serine 443, serine 453, and serine 464 each carry phosphoserine. The segment at 469 to 536 is disordered; the sequence is IEMLKVPDDE…EEDEDESYQS (68 aa). Over residues 484 to 497 the composition is skewed to polar residues; sequence TCPSTFSEEMTPTS. The span at 508-518 shows a compositional bias: acidic residues; it reads EEEEKESDSDS. Residues serine 514, serine 516, serine 557, and serine 590 each carry the phosphoserine modification. 2 RPEL repeats span residues 583-608 and 621-646; these read NTLI…QPKN and RRLT…RFNE. The tract at residues 592–615 is disordered; that stretch reads RPTPEELEQRNILQPKNEADRQAE. Position 628 is a phosphoserine (serine 628).

Belongs to the phosphatase and actin regulator family. In terms of assembly, binds PPP1CA and actin.

Its subcellular location is the cytoplasm. The protein localises to the cell projection. It localises to the lamellipodium. In terms of biological role, regulator of protein phosphatase 1 (PP1) required for neural tube and optic fissure closure, and enteric neural crest cell (ENCCs) migration during development. Acts as an activator of PP1 by interacting with PPP1CA and preventing phosphorylation of PPP1CA at 'Thr-320'. During neural tube closure, localizes to the ventral neural tube and activates PP1, leading to down-regulate cell proliferation within cranial neural tissue and the neural retina. Also acts as a regulator of migration of enteric neural crest cells (ENCCs) by activating PP1, leading to dephosphorylation and subsequent activation of cofilin (COF1 or COF2) and repression of the integrin signaling through the RHO/ROCK pathway. The protein is Phosphatase and actin regulator 4 (PHACTR4) of Homo sapiens (Human).